Consider the following 371-residue polypeptide: Probable dual-specificity RNA methyltransferase RlmN (371 aa).

Glu-114 serves as the catalytic Proton acceptor. Residues 120-346 enclose the Radical SAM core domain; it reads DGPRRSICVS…ESAGVNVNFR (227 aa). Cys-127 and Cys-357 are oxidised to a cystine. [4Fe-4S] cluster is bound by residues Cys-134, Cys-138, and Cys-141. S-adenosyl-L-methionine contacts are provided by residues 183–184, Ser-215, 238–240, and Asn-314; these read GE and SLH. The S-methylcysteine intermediate role is filled by Cys-357.

It belongs to the radical SAM superfamily. RlmN family. [4Fe-4S] cluster serves as cofactor.

The protein resides in the cytoplasm. The enzyme catalyses adenosine(2503) in 23S rRNA + 2 reduced [2Fe-2S]-[ferredoxin] + 2 S-adenosyl-L-methionine = 2-methyladenosine(2503) in 23S rRNA + 5'-deoxyadenosine + L-methionine + 2 oxidized [2Fe-2S]-[ferredoxin] + S-adenosyl-L-homocysteine. It catalyses the reaction adenosine(37) in tRNA + 2 reduced [2Fe-2S]-[ferredoxin] + 2 S-adenosyl-L-methionine = 2-methyladenosine(37) in tRNA + 5'-deoxyadenosine + L-methionine + 2 oxidized [2Fe-2S]-[ferredoxin] + S-adenosyl-L-homocysteine. Functionally, specifically methylates position 2 of adenine 2503 in 23S rRNA and position 2 of adenine 37 in tRNAs. The protein is Probable dual-specificity RNA methyltransferase RlmN of Rhodopirellula baltica (strain DSM 10527 / NCIMB 13988 / SH1).